We begin with the raw amino-acid sequence, 768 residues long: MSGNNSPINAQLFPDARDVTKDALQTFVELPECTYMKGLGSSQQAEVMACDCKPGPTACDEDSGCINRLTSIECVRCCKGCQNKRFQGKKYASVDVISTEKKGFGLRATKDIAAGEFVYEYVGEVIDEPTFKERTAIYTTQGVKHFYFMMLQKGEFIDATAKGGLGRFCNHSCAPNGHVEKWVVGKRLRMGIFASRHIQRGEEVTFDYNVDRYGAEAQACYCGEKNCVGFLGGKTQTESASKVSGTLTAALGLTSRDINAILRGKKSAEDLRPRDLTVQDVSKVMASLMMNQEAWQVNLMLQRIALCTDTSVQAAVMKMHGYQIFAQILTATWGDNPLGLDDSDRVNVTLMLLRVLQKWPRITKNKISSSQIENVVKSLTSNDNSDIATIAQELLSEWANLKMAFRIPRRKIDPDGDEHSVSRGTSEEVTKESSKSEEPNDVEVVKVNKKADNNGNGVTDSPSTRSESPFTFIPTPYSNKTAPKGPKKAVKQPASPMVPPRSLPKGWQFANDPQGKVYYYNLELNIQQWDFPKASRASSPSTPKGPKGPKGPRGNRRDERRDNSETREPLSLQSQRESDLQRIIEQARLQEVKNNSEPAPSASAKPVNAQAHRLTKLLAKVVPNQVSKYDVDRERAKKCSKDIVQILVDKELKRPEPMTEISDEKAKKIKEFVKGYMGKVVKRLEEKEGGAKDFGRGRQGNRRDSERQSDRRGRQGQSDRDHSDNHGRKRKGEENQPYEAGPMYDDESAETSTETVKKPKVDMEIDLE.

The AWS domain maps to 45–90; the sequence is AEVMACDCKPGPTACDEDSGCINRLTSIECVRCCKGCQNKRFQGKK. Positions 92 to 209 constitute an SET domain; sequence ASVDVISTEK…RGEEVTFDYN (118 aa). The Post-SET domain occupies 216-232; it reads EAQACYCGEKNCVGFLG. Residues 411–452 are compositionally biased toward basic and acidic residues; that stretch reads KIDPDGDEHSVSRGTSEEVTKESSKSEEPNDVEVVKVNKKAD. Disordered stretches follow at residues 411–508, 533–610, and 680–768; these read KIDP…KGWQ, KASR…VNAQ, and VVKR…IDLE. A compositionally biased stretch (polar residues) spans 453 to 469; it reads NNGNGVTDSPSTRSESP. The region spanning 501-534 is the WW domain; that stretch reads RSLPKGWQFANDPQGKVYYYNLELNIQQWDFPKA. Composition is skewed to basic and acidic residues over residues 555–568, 682–734, and 755–768; these read NRRD…ETRE, KRLE…KGEE, and TVKK…IDLE.

It belongs to the class V-like SAM-binding methyltransferase superfamily. Histone-lysine methyltransferase family. SET2 subfamily.

The protein localises to the nucleus. Its subcellular location is the chromosome. It carries out the reaction L-lysyl(36)-[histone H3] + 3 S-adenosyl-L-methionine = N(6),N(6),N(6)-trimethyl-L-lysyl(36)-[histone H3] + 3 S-adenosyl-L-homocysteine + 3 H(+). Histone methyltransferase that trimethylates histone H3 'Lys-36' forming H3K36me3. Involved in transcription elongation as well as in transcription repression. The protein is Histone-lysine N-methyltransferase, H3 lysine-36 specific (set-2) of Yarrowia lipolytica (strain CLIB 122 / E 150) (Yeast).